Here is a 525-residue protein sequence, read N- to C-terminus: GMP synthase [glutamine-hydrolyzing] (525 aa).

Positions 9–202 (SILIIDFGSQ…VHKIVGLKSD (194 aa)) constitute a Glutamine amidotransferase type-1 domain. C86 serves as the catalytic Nucleophile. Catalysis depends on residues H176 and E178. One can recognise a GMPS ATP-PPase domain in the interval 203 to 400 (WTMAAYRAEM…LGLPESFIGR (198 aa)). 230–236 (SGGVDSS) is an ATP binding site.

As to quaternary structure, homodimer.

It catalyses the reaction XMP + L-glutamine + ATP + H2O = GMP + L-glutamate + AMP + diphosphate + 2 H(+). Its pathway is purine metabolism; GMP biosynthesis; GMP from XMP (L-Gln route): step 1/1. In terms of biological role, catalyzes the synthesis of GMP from XMP. The polypeptide is GMP synthase [glutamine-hydrolyzing] (Agrobacterium fabrum (strain C58 / ATCC 33970) (Agrobacterium tumefaciens (strain C58))).